The primary structure comprises 362 residues: 3-dehydroquinate synthase (362 aa).

NAD(+)-binding positions include Asp71 to Lys76, Gly105 to Asp109, Thr129 to Thr130, Lys142, and Lys151. 3 residues coordinate Zn(2+): Glu184, His247, and His264.

This sequence belongs to the sugar phosphate cyclases superfamily. Dehydroquinate synthase family. NAD(+) serves as cofactor. It depends on Co(2+) as a cofactor. The cofactor is Zn(2+).

It is found in the cytoplasm. The catalysed reaction is 7-phospho-2-dehydro-3-deoxy-D-arabino-heptonate = 3-dehydroquinate + phosphate. The protein operates within metabolic intermediate biosynthesis; chorismate biosynthesis; chorismate from D-erythrose 4-phosphate and phosphoenolpyruvate: step 2/7. Its function is as follows. Catalyzes the conversion of 3-deoxy-D-arabino-heptulosonate 7-phosphate (DAHP) to dehydroquinate (DHQ). In Haemophilus ducreyi (strain 35000HP / ATCC 700724), this protein is 3-dehydroquinate synthase.